A 210-amino-acid chain; its full sequence is Protein GrpE (210 aa).

The tract at residues 1–71 is disordered; the sequence is MSEKDQSVNN…DTKIKELEKL (71 aa). The segment covering 11-23 has biased composition (acidic residues); it reads TEEDFNVETEDNQ. Polar residues predominate over residues 24 to 35; it reads NDTNIENSVSNT. Residues 36–46 are compositionally biased toward low complexity; it reads DNSEANASDSE. Residues 47 to 60 show a composition bias toward acidic residues; the sequence is NNSEESIKDEESES. Basic and acidic residues predominate over residues 61 to 71; that stretch reads QDTKIKELEKL.

Belongs to the GrpE family. Homodimer.

The protein localises to the cytoplasm. Its function is as follows. Participates actively in the response to hyperosmotic and heat shock by preventing the aggregation of stress-denatured proteins, in association with DnaK and GrpE. It is the nucleotide exchange factor for DnaK and may function as a thermosensor. Unfolded proteins bind initially to DnaJ; upon interaction with the DnaJ-bound protein, DnaK hydrolyzes its bound ATP, resulting in the formation of a stable complex. GrpE releases ADP from DnaK; ATP binding to DnaK triggers the release of the substrate protein, thus completing the reaction cycle. Several rounds of ATP-dependent interactions between DnaJ, DnaK and GrpE are required for fully efficient folding. The chain is Protein GrpE from Staphylococcus epidermidis (strain ATCC 35984 / DSM 28319 / BCRC 17069 / CCUG 31568 / BM 3577 / RP62A).